A 173-amino-acid chain; its full sequence is Crossover junction endodeoxyribonuclease RuvC (173 aa).

Active-site residues include aspartate 8, glutamate 69, and aspartate 141. Aspartate 8, glutamate 69, and aspartate 141 together coordinate Mg(2+).

This sequence belongs to the RuvC family. Homodimer which binds Holliday junction (HJ) DNA. The HJ becomes 2-fold symmetrical on binding to RuvC with unstacked arms; it has a different conformation from HJ DNA in complex with RuvA. In the full resolvosome a probable DNA-RuvA(4)-RuvB(12)-RuvC(2) complex forms which resolves the HJ. Requires Mg(2+) as cofactor.

Its subcellular location is the cytoplasm. It catalyses the reaction Endonucleolytic cleavage at a junction such as a reciprocal single-stranded crossover between two homologous DNA duplexes (Holliday junction).. Its function is as follows. The RuvA-RuvB-RuvC complex processes Holliday junction (HJ) DNA during genetic recombination and DNA repair. Endonuclease that resolves HJ intermediates. Cleaves cruciform DNA by making single-stranded nicks across the HJ at symmetrical positions within the homologous arms, yielding a 5'-phosphate and a 3'-hydroxyl group; requires a central core of homology in the junction. The consensus cleavage sequence is 5'-(A/T)TT(C/G)-3'. Cleavage occurs on the 3'-side of the TT dinucleotide at the point of strand exchange. HJ branch migration catalyzed by RuvA-RuvB allows RuvC to scan DNA until it finds its consensus sequence, where it cleaves and resolves the cruciform DNA. In Stenotrophomonas maltophilia (strain R551-3), this protein is Crossover junction endodeoxyribonuclease RuvC.